Consider the following 239-residue polypeptide: MKAPKALTAEEREKVEAVIGYHFIGKERLDKALTHSSARPAKGSDYERLEFLGDRVLGLCVAEHLFKVFRAATEGELSVRLNQLVSAETCAAVADEIQLHRYIRTGADVKKLTDKNMLNVRADVVESLIAAIYLDAGLEAARAFVLKFWAERASRQDAGRRDAKTELQEWAHAKFAVTPVYRVADRSGPDHDPSFTVTVEIGKLEPETGIDRSKRAAEQAAATRLLEREGVWTRSTASD.

Residues 12 to 137 (REKVEAVIGY…LIAAIYLDAG (126 aa)) enclose the RNase III domain. Position 50 (glutamate 50) interacts with Mg(2+). Aspartate 54 is an active-site residue. 2 residues coordinate Mg(2+): aspartate 123 and glutamate 126. Residue glutamate 126 is part of the active site. Residues 162–231 (DAKTELQEWA…ATRLLEREGV (70 aa)) enclose the DRBM domain.

Belongs to the ribonuclease III family. Homodimer. Mg(2+) serves as cofactor.

It is found in the cytoplasm. The enzyme catalyses Endonucleolytic cleavage to 5'-phosphomonoester.. In terms of biological role, digests double-stranded RNA. Involved in the processing of primary rRNA transcript to yield the immediate precursors to the large and small rRNAs (23S and 16S). Processes some mRNAs, and tRNAs when they are encoded in the rRNA operon. Processes pre-crRNA and tracrRNA of type II CRISPR loci if present in the organism. This is Ribonuclease 3 from Allorhizobium ampelinum (strain ATCC BAA-846 / DSM 112012 / S4) (Agrobacterium vitis (strain S4)).